A 147-amino-acid chain; its full sequence is Hemoglobin subunit gamma-1 (147 aa).

Gly2 carries the post-translational modification N-acetylglycine. Positions 3-147 (HFTEEDKATI…VASALSSRYH (145 aa)) constitute a Globin domain. Residue Thr13 is modified to Phosphothreonine. Phosphoserine occurs at positions 45, 51, and 53. Residue Lys60 is modified to N6-acetyllysine. A heme b-binding site is contributed by His64. Lys83 is modified (N6-acetyllysine). His93 is a binding site for heme b. The residue at position 94 (Cys94) is an S-nitrosocysteine. Ser140 bears the Phosphoserine mark.

This sequence belongs to the globin family. In terms of assembly, heterotetramer of two alpha chains and two gamma chains in fetal hemoglobin (Hb F). The ratio of gamma-G to gamma-A chains in is approximately 2:1 in infant chimpanzee, and 1:2 in the adult. Red blood cells.

In terms of biological role, gamma chains make up the fetal hemoglobin F, in combination with alpha chains. This Pan troglodytes (Chimpanzee) protein is Hemoglobin subunit gamma-1 (HBG1).